The chain runs to 106 residues: 3-phenylpropionate/cinnamic acid dioxygenase ferredoxin subunit (106 aa).

The Rieske domain maps to 4 to 99 (IYACPVADVP…VHVEGSDIFI (96 aa)). Cysteine 42, histidine 44, cysteine 62, and histidine 65 together coordinate [2Fe-2S] cluster.

Belongs to the bacterial ring-hydroxylating dioxygenase ferredoxin component family. As to quaternary structure, this dioxygenase system consists of four proteins: the two subunits of the hydroxylase component (HcaE and HcaF), a ferredoxin (HcaC) and a ferredoxin reductase (HcaD). [2Fe-2S] cluster is required as a cofactor.

It functions in the pathway aromatic compound metabolism; 3-phenylpropanoate degradation. Part of the multicomponent 3-phenylpropionate dioxygenase, that converts 3-phenylpropionic acid (PP) and cinnamic acid (CI) into 3-phenylpropionate-dihydrodiol (PP-dihydrodiol) and cinnamic acid-dihydrodiol (CI-dihydrodiol), respectively. This protein seems to be a 2Fe-2S ferredoxin. This Shigella boydii serotype 4 (strain Sb227) protein is 3-phenylpropionate/cinnamic acid dioxygenase ferredoxin subunit.